The sequence spans 374 residues: Alcohol dehydrogenase class-3 (374 aa).

Position 2 is an N-acetylserine (Ser-2). The Zn(2+) site is built by Cys-45, His-67, Cys-97, Cys-100, Cys-103, Cys-111, and Cys-174. Position 233 is an N6-succinyllysine (Lys-233). Ser-247 is subject to Phosphoserine. The residue at position 315 (Lys-315) is an N6-succinyllysine. A phosphoserine mark is found at Ser-324 and Ser-351.

Belongs to the zinc-containing alcohol dehydrogenase family. Class-III subfamily. In terms of assembly, homodimer. The cofactor is Zn(2+).

Its subcellular location is the cytoplasm. It catalyses the reaction a primary alcohol + NAD(+) = an aldehyde + NADH + H(+). The catalysed reaction is a secondary alcohol + NAD(+) = a ketone + NADH + H(+). It carries out the reaction S-(hydroxymethyl)glutathione + NADP(+) = S-formylglutathione + NADPH + H(+). The enzyme catalyses S-(hydroxymethyl)glutathione + NAD(+) = S-formylglutathione + NADH + H(+). It catalyses the reaction 20-oxo-(5Z,8Z,11Z,14Z)-eicosatetraenoate + NAD(+) + H2O = (5Z,8Z,11Z,14Z)-eicosatetraenedioate + NADH + 2 H(+). The catalysed reaction is 20-hydroxy-(5Z,8Z,11Z,14Z)-eicosatetraenoate + NAD(+) = 20-oxo-(5Z,8Z,11Z,14Z)-eicosatetraenoate + NADH + H(+). It carries out the reaction S-nitrosoglutathione + NADH + H(+) = S-(hydroxysulfenamide)glutathione + NAD(+). In terms of biological role, catalyzes the oxidation of long-chain primary alcohols and the oxidation of S-(hydroxymethyl) glutathione. Also oxidizes long chain omega-hydroxy fatty acids, such as 20-HETE, producing both the intermediate aldehyde, 20-oxoarachidonate and the end product, a dicarboxylic acid, (5Z,8Z,11Z,14Z)-eicosatetraenedioate. Class-III ADH is remarkably ineffective in oxidizing ethanol. Required for clearance of cellular formaldehyde, a cytotoxic and carcinogenic metabolite that induces DNA damage. Also acts as a S-nitroso-glutathione reductase by catalyzing the NADH-dependent reduction of S-nitrosoglutathione, thereby regulating protein S-nitrosylation. The polypeptide is Alcohol dehydrogenase class-3 (Equus caballus (Horse)).